Consider the following 397-residue polypeptide: Glutamyl-tRNA reductase (397 aa).

Residues 47 to 50, serine 98, 103 to 105, and glutamine 109 each bind substrate; these read TCGR and ETD. The active-site Nucleophile is cysteine 48. NADP(+) is bound at residue 177–182; that stretch reads GAGAVG.

This sequence belongs to the glutamyl-tRNA reductase family. As to quaternary structure, homodimer.

It catalyses the reaction (S)-4-amino-5-oxopentanoate + tRNA(Glu) + NADP(+) = L-glutamyl-tRNA(Glu) + NADPH + H(+). It functions in the pathway porphyrin-containing compound metabolism; protoporphyrin-IX biosynthesis; 5-aminolevulinate from L-glutamyl-tRNA(Glu): step 1/2. Catalyzes the NADPH-dependent reduction of glutamyl-tRNA(Glu) to glutamate 1-semialdehyde (GSA). In Pyrobaculum aerophilum (strain ATCC 51768 / DSM 7523 / JCM 9630 / CIP 104966 / NBRC 100827 / IM2), this protein is Glutamyl-tRNA reductase.